We begin with the raw amino-acid sequence, 119 residues long: Small ribosomal subunit protein eS25 (119 aa).

The disordered stretch occupies residues 1–42 (MPPKKDTKASAKQPQKTQKKKEGSGGGKAKKKKWSKGKVRDK). Residues 28–37 (KAKKKKWSKG) are compositionally biased toward basic residues.

It belongs to the eukaryotic ribosomal protein eS25 family.

The chain is Small ribosomal subunit protein eS25 (RpS25) from Spodoptera frugiperda (Fall armyworm).